Reading from the N-terminus, the 872-residue chain is Oxidation resistance protein 1 (872 aa).

Residues 1 to 86 (MSVTNLSWLK…QKKTLDKKDG (86 aa)) are disordered. Over residues 63-86 (RRSELKRFYTIDTGQKKTLDKKDG) the composition is skewed to basic and acidic residues. S90 bears the Phosphoserine mark. The 44-residue stretch at 98–141 (VKYTVESRDSLNSIALKFDTTPNELVQLNKLFSRAVVTGQVLYV) folds into the LysM domain. Position 118 is a phosphothreonine (T118). Over residues 150–168 (VESSPSLSPISPLSPTSSE) the composition is skewed to low complexity. The tract at residues 150-187 (VESSPSLSPISPLSPTSSEAELEKTTTPDVVHPKEPTP) is disordered. The span at 170–184 (ELEKTTTPDVVHPKE) shows a compositional bias: basic and acidic residues. Phosphoserine occurs at positions 201, 202, and 204. The region spanning 212 to 268 (EKFLKINCRYITSSKGTVSGVLLVTPNNIMFDPHKTDPLVQENGCEEYGIMCPMEEV) is the GRAM domain. Phosphoserine is present on residues S294, S334, and S336. A disordered region spans residues 314–338 (SRIRDAANDSASTAPRSTEESLSED). A Phosphothreonine modification is found at T341. S346 and S496 each carry phosphoserine. A mediates oxidative antimutator activity region spans residues 549 to 576 (RRHRLHKFLCLRVRKPMRKTFVSQASAT). A TLDc domain is found at 711 to 872 (HLLLPDQIIK…IQDIEIWAFK (162 aa)).

It belongs to the OXR1 family.

It is found in the mitochondrion. Functionally, may be involved in protection from oxidative damage. In Bos taurus (Bovine), this protein is Oxidation resistance protein 1 (OXR1).